The chain runs to 61 residues: Conotoxin Am14.1 (61 aa).

2 consecutive propeptides follow at residues 1 to 19 (MLSV…HLPR) and 52 to 61 (KRDLDLFTDQ).

Mostly non-hydroxylated. Post-translationally, contains 2 disulfide bonds. In terms of tissue distribution, expressed by the venom duct.

Its subcellular location is the secreted. Probable toxin that inhibits ion channels. This chain is Conotoxin Am14.1, found in Conus amadis (Amadis cone).